The following is a 212-amino-acid chain: 3-oxo-tetronate 4-phosphate decarboxylase (212 aa).

Catalysis depends on Glu-79, which acts as the Proton acceptor. Zn(2+) is bound by residues Glu-79, His-98, and His-100. The active-site Proton donor is the Tyr-125. His-165 is a Zn(2+) binding site.

It belongs to the aldolase class II family. AraD/FucA subfamily. Requires Zn(2+) as cofactor.

The enzyme catalyses 3-dehydro-4-O-phospho-D-erythronate + H(+) = dihydroxyacetone phosphate + CO2. It carries out the reaction 3-dehydro-4-O-phospho-L-erythronate + H(+) = dihydroxyacetone phosphate + CO2. Its function is as follows. Catalyzes the decarboxylation of 3-oxo-tetronate 4-phosphate to dihydroxyacetone phosphate (DHAP) and CO(2). This Escherichia coli O6:H1 (strain CFT073 / ATCC 700928 / UPEC) protein is 3-oxo-tetronate 4-phosphate decarboxylase.